A 268-amino-acid chain; its full sequence is Homeobox protein Hox-D12 (268 aa).

A disordered region spans residues 102–124; the sequence is TPDAPTASEERSRTRPPFAPESS. Residues 200 to 259 constitute a DNA-binding region (homeobox); it reads ARKKRKPYTKQQIAELENEFLVNEFINRQKRKELSNRLNLSDQQVKIWFQNRRMKKKRVV.

Belongs to the Abd-B homeobox family.

It is found in the nucleus. Its function is as follows. Sequence-specific transcription factor which is part of a developmental regulatory system that provides cells with specific positional identities on the anterior-posterior axis. The chain is Homeobox protein Hox-D12 (Hoxd12) from Mus musculus (Mouse).